The following is a 208-amino-acid chain: 3-demethoxyubiquinol 3-hydroxylase (208 aa).

Fe cation-binding residues include Glu57, Glu87, His90, Glu139, Glu171, and His174.

The protein belongs to the COQ7 family. It depends on Fe cation as a cofactor.

It is found in the cell membrane. The catalysed reaction is a 5-methoxy-2-methyl-3-(all-trans-polyprenyl)benzene-1,4-diol + AH2 + O2 = a 3-demethylubiquinol + A + H2O. It functions in the pathway cofactor biosynthesis; ubiquinone biosynthesis. Functionally, catalyzes the hydroxylation of 2-nonaprenyl-3-methyl-6-methoxy-1,4-benzoquinol during ubiquinone biosynthesis. This Burkholderia cenocepacia (strain ATCC BAA-245 / DSM 16553 / LMG 16656 / NCTC 13227 / J2315 / CF5610) (Burkholderia cepacia (strain J2315)) protein is 3-demethoxyubiquinol 3-hydroxylase.